An 893-amino-acid polypeptide reads, in one-letter code: MAGHHHEHEQERDHEQEHEHDSLQRPTTGSERTRSISFSKLLTRSWKRNASSSNNMSVSSVNLYSDPENSRESDHNNSGSEGQSSRFSKLKSMFQSGNSSKNASAHNSSQSSLEGDSASSSSKLRYVKPMTSVANASPASPPLSPTIPETDVLQTPKMVHIDQHEHEREHSNCGSPIMLSSSSFSPTVARTGTGRRRSPSTPIMPSQNSNNSSSTSAIRPNNYRHHSGSQGFSSNNPFRERAGTVRSSNPYFAYQGLPTHAMSSHDLDEGFQPYANGSGIHFLSTPTSKTNSLTNTKNLSNLSLNEIKENEEVQEFNNEDFFFHDIPKDLSLKDTLNGSPSRGSSKSPTITQTFPSIIVGFDNEYEEDNNNDKHDEKEEQQTTTDNKTRNLSPTKQNGKATHPRIKIPLRRAASEPNGLQLASATSPTSSSARKTSGSSNINDKIPGQSVPPPNSFFPQEPSPKISDFPEPRRSRRLRTKSFSNKFQDIMVGPQSFEKIRLLGQGDVGKVFLVREKKTNRVYALKVLSKDEMIKRNKIKRVLTEQEILATSNHPFIVTLYHSFQSEDYLYLCMEYCMGGEFFRALQTRKTKCICEDDARFYASEVTAALEYLHLLGFIYRDLKPENILLHQSGHIMLSDFDLSIQAKDSKVPVVKGSAQSTLVDTKICSDGFRTNSFVGTEEYIAPEVIRGNGHTAAVDWWTLGILIYEMLFGFTPFKGDNTNETFTNILKNEVSFPNNNEISRTCKDLIKKLLTKNESKRLGCKMGAADVKKHPFFKKVQWSLLRNQEPPLIPVLSEDGYDFAKLSSNKKRQTSQDSHKHLDEQEKNMFEERVEYDDEVSEDDPFHDFNSMSLMEQDNNSMIYGNTNSYGKIAYTPNSNRSRSNSHRTFFKR.

Residues 1–23 (MAGHHHEHEQERDHEQEHEHDSL) show a composition bias toward basic and acidic residues. 3 disordered regions span residues 1-124 (MAGH…SSKL), 129-148 (PMTSVANASPASPPLSPTIP), and 163-243 (QHEH…ERAG). The span at 24-42 (QRPTTGSERTRSISFSKLL) shows a compositional bias: polar residues. The segment covering 49 to 62 (NASSSNNMSVSSVN) has biased composition (low complexity). Positions 76 to 87 (NNSGSEGQSSRF) are enriched in polar residues. Residues 96–122 (SGNSSKNASAHNSSQSSLEGDSASSSS) are compositionally biased toward low complexity. S140, S144, S171, S175, and S185 each carry phosphoserine. Over residues 206-216 (SQNSNNSSSTS) the composition is skewed to low complexity. Positions 228 to 237 (GSQGFSSNNP) are enriched in polar residues. S300 bears the Phosphoserine mark. Polar residues predominate over residues 334–355 (DTLNGSPSRGSSKSPTITQTFP). The segment at 334 to 480 (DTLNGSPSRG…PRRSRRLRTK (147 aa)) is disordered. Basic and acidic residues predominate over residues 370–380 (NNDKHDEKEEQ). Over residues 381 to 399 (QTTTDNKTRNLSPTKQNGK) the composition is skewed to polar residues. Position 414 is a phosphoserine (S414). The span at 422 to 439 (ASATSPTSSSARKTSGSS) shows a compositional bias: low complexity. S462 is modified (phosphoserine). In terms of domain architecture, Protein kinase spans 496–777 (FEKIRLLGQG…AADVKKHPFF (282 aa)). ATP is bound by residues 502–510 (LGQGDVGKV) and K525. The active-site Proton acceptor is the D621. Residues 778–861 (KKVQWSLLRN…MSLMEQDNNS (84 aa)) enclose the AGC-kinase C-terminal domain. Positions 874–893 (AYTPNSNRSRSNSHRTFFKR) are disordered. Residues 884 to 893 (SNSHRTFFKR) are compositionally biased toward basic residues.

It belongs to the protein kinase superfamily. Ser/Thr protein kinase family. KIN82 subfamily. Post-translationally, the N-terminal non-catalytic domain is phosphorylated by YPK1.

The protein resides in the cytoplasm. The protein localises to the cell membrane. It catalyses the reaction L-seryl-[protein] + ATP = O-phospho-L-seryl-[protein] + ADP + H(+). The catalysed reaction is L-threonyl-[protein] + ATP = O-phospho-L-threonyl-[protein] + ADP + H(+). Its activity is regulated as follows. Down-regulated by YKP1 phosphorylation. This effect is counteracted in the presence of mannosyl-inositolphosphorylceramide (MIPC). Its function is as follows. Flippase activator that phosphorylates DNF1 and DNF2 and which is involved in the generation of phospholipid asymmetry in membranes by the inward translocation of phospholipids and in the retrieval pathway from early endosomes to the trans-Golgi network (TGN). Also phosphorylates the N-terminal half of YPK1. Involved in pheromone-response. The protein is Flippase kinase 1 (FPK1) of Saccharomyces cerevisiae (strain ATCC 204508 / S288c) (Baker's yeast).